Consider the following 225-residue polypeptide: Glycerol-3-phosphate acyltransferase (225 aa).

6 consecutive transmembrane segments (helical) span residues 6-26 (FFFF…LIIG), 55-75 (WGIV…IICL), 95-115 (DIAI…SIFN), 135-155 (PFIG…VGYA), 160-180 (IMAT…PGIT), and 187-207 (ILYF…HSNI).

Belongs to the PlsY family. In terms of assembly, probably interacts with PlsX.

It is found in the cell membrane. It carries out the reaction an acyl phosphate + sn-glycerol 3-phosphate = a 1-acyl-sn-glycero-3-phosphate + phosphate. Its pathway is lipid metabolism; phospholipid metabolism. Catalyzes the transfer of an acyl group from acyl-phosphate (acyl-PO(4)) to glycerol-3-phosphate (G3P) to form lysophosphatidic acid (LPA). This enzyme utilizes acyl-phosphate as fatty acyl donor, but not acyl-CoA or acyl-ACP. In Phytoplasma australiense, this protein is Glycerol-3-phosphate acyltransferase.